The primary structure comprises 216 residues: Holliday junction branch migration complex subunit RuvA (216 aa).

Residues 1–64 (MISFIKGVLI…EDAQQLYGFK (64 aa)) form a domain I region. The interval 65 to 143 (SKVDKKVFQE…KMANEIYAQT (79 aa)) is domain II. A flexible linker region spans residues 144 to 163 (SGTTTTSQDSQAQQAPTSVV). Residues 164–216 (LANSIFNESVDALLALGYKQKDAEKMARSAMGDATTAAEVIRKALQGSIKSKG) form a domain III region.

The protein belongs to the RuvA family. Homotetramer. Forms an RuvA(8)-RuvB(12)-Holliday junction (HJ) complex. HJ DNA is sandwiched between 2 RuvA tetramers; dsDNA enters through RuvA and exits via RuvB. An RuvB hexamer assembles on each DNA strand where it exits the tetramer. Each RuvB hexamer is contacted by two RuvA subunits (via domain III) on 2 adjacent RuvB subunits; this complex drives branch migration. In the full resolvosome a probable DNA-RuvA(4)-RuvB(12)-RuvC(2) complex forms which resolves the HJ.

Its subcellular location is the cytoplasm. Its function is as follows. The RuvA-RuvB-RuvC complex processes Holliday junction (HJ) DNA during genetic recombination and DNA repair, while the RuvA-RuvB complex plays an important role in the rescue of blocked DNA replication forks via replication fork reversal (RFR). RuvA specifically binds to HJ cruciform DNA, conferring on it an open structure. The RuvB hexamer acts as an ATP-dependent pump, pulling dsDNA into and through the RuvAB complex. HJ branch migration allows RuvC to scan DNA until it finds its consensus sequence, where it cleaves and resolves the cruciform DNA. This is Holliday junction branch migration complex subunit RuvA from Francisella tularensis subsp. holarctica (strain FTNF002-00 / FTA).